Consider the following 297-residue polypeptide: Protoheme IX farnesyltransferase (297 aa).

The next 9 helical transmembrane spans lie at 12–32 (PGIIFGNLISVIGGFLLAAKG), 36–56 (YALFLATLLGVSLVVASGCVF), 85–105 (VSLVYATVLGIAGFALLYLAA), 108–128 (LAMWLAVMGFVVYVGVYSLYM), 133–153 (VYGTLIGSLSGAAPPVIGYCA), 163–183 (LILLLIFSLWQMPHSYAIAIF), 209–229 (ITLYIIGFMVATLMLTLSGYA), 230–250 (GYKYLIVAASVSVWWLGMALQ), and 266–286 (FIFSIVAINSLSVMMSVDFMV).

Belongs to the UbiA prenyltransferase family. Protoheme IX farnesyltransferase subfamily.

The protein resides in the cell inner membrane. The catalysed reaction is heme b + (2E,6E)-farnesyl diphosphate + H2O = Fe(II)-heme o + diphosphate. The protein operates within porphyrin-containing compound metabolism; heme O biosynthesis; heme O from protoheme: step 1/1. Converts heme B (protoheme IX) to heme O by substitution of the vinyl group on carbon 2 of heme B porphyrin ring with a hydroxyethyl farnesyl side group. The polypeptide is Protoheme IX farnesyltransferase (Sodalis glossinidius (strain morsitans)).